Here is a 247-residue protein sequence, read N- to C-terminus: 6-phosphogluconolactonase (247 aa).

Belongs to the glucosamine/galactosamine-6-phosphate isomerase family. 6-phosphogluconolactonase subfamily.

The enzyme catalyses 6-phospho-D-glucono-1,5-lactone + H2O = 6-phospho-D-gluconate + H(+). It functions in the pathway carbohydrate degradation; pentose phosphate pathway; D-ribulose 5-phosphate from D-glucose 6-phosphate (oxidative stage): step 2/3. In terms of biological role, hydrolysis of 6-phosphogluconolactone to 6-phosphogluconate. This Mycobacterium bovis (strain ATCC BAA-935 / AF2122/97) protein is 6-phosphogluconolactonase (pgl).